A 190-amino-acid polypeptide reads, in one-letter code: Endoribonuclease YbeY (190 aa).

Positions 1–25 (MSQPRPGHRPDCNGADPDSNFASMT) are disordered. Zn(2+)-binding residues include histidine 147, histidine 151, and histidine 157.

Belongs to the endoribonuclease YbeY family. The cofactor is Zn(2+).

The protein resides in the cytoplasm. Single strand-specific metallo-endoribonuclease involved in late-stage 70S ribosome quality control and in maturation of the 3' terminus of the 16S rRNA. This chain is Endoribonuclease YbeY, found in Rhodopseudomonas palustris (strain ATCC BAA-98 / CGA009).